Here is a 278-residue protein sequence, read N- to C-terminus: Alcohol dehydrogenase-related 31 kDa protein (278 aa).

11–34 (YVADCGGIALETSKVLMTKNIAKL) lines the NAD(+) pocket. Residue Ser139 participates in substrate binding. Tyr152 (proton acceptor) is an active-site residue.

It belongs to the short-chain dehydrogenases/reductases (SDR) family.

The polypeptide is Alcohol dehydrogenase-related 31 kDa protein (Adhr) (Drosophila pseudoobscura pseudoobscura (Fruit fly)).